We begin with the raw amino-acid sequence, 301 residues long: Putative carboxypeptidase slr1534 (301 aa).

The active-site Nucleophile is Ser-116. Active-site charge relay system residues include Glu-206 and His-276.

The protein belongs to the peptidase S66 family.

In Synechocystis sp. (strain ATCC 27184 / PCC 6803 / Kazusa), this protein is Putative carboxypeptidase slr1534.